Here is a 256-residue protein sequence, read N- to C-terminus: 5-keto-4-deoxy-D-glucarate aldolase (256 aa).

Residue His50 is the Proton acceptor of the active site. Gln151 serves as a coordination point for substrate. Glu153 provides a ligand contact to Mg(2+). Positions 178 and 179 each coordinate substrate. A Mg(2+)-binding site is contributed by Asp179.

This sequence belongs to the HpcH/HpaI aldolase family. KDGluc aldolase subfamily. As to quaternary structure, homohexamer; trimer of dimers. The cofactor is Mg(2+).

It catalyses the reaction 5-dehydro-4-deoxy-D-glucarate = 2-hydroxy-3-oxopropanoate + pyruvate. The enzyme catalyses 2-dehydro-3-deoxy-D-glucarate = 2-hydroxy-3-oxopropanoate + pyruvate. Its pathway is carbohydrate acid metabolism; galactarate degradation; D-glycerate from galactarate: step 2/3. Catalyzes the reversible retro-aldol cleavage of both 5-keto-4-deoxy-D-glucarate and 2-keto-3-deoxy-D-glucarate to pyruvate and tartronic semialdehyde. This is 5-keto-4-deoxy-D-glucarate aldolase from Escherichia coli (strain K12 / DH10B).